Here is a 173-residue protein sequence, read N- to C-terminus: uncharacterized protein (173 aa).

The segment at 80–107 (HSATVKRTDSSHRLKSHVVDKRPRRSLD) is disordered. A compositionally biased stretch (basic and acidic residues) spans 85–107 (KRTDSSHRLKSHVVDKRPRRSLD).

This is an uncharacterized protein from Autographa californica nuclear polyhedrosis virus (AcMNPV).